The primary structure comprises 198 residues: MDDERVSQDPTAENETDAEDRNDDDPSGSAPPQPVTHQRRLLLFVIAGVVLATDLLTKILAVANIEPGRPVWLIGDIVSLRLVRNPGAAFSMATGMTWLLTLVAVGVVIGVVRIGRTLRSPWWALGLGLVLGGALGNLVDRFFRAPGVMQGHVVDFVSVGWWPVFNVADSGIVCGAILLVVLTLIGLEPDGTRKGVEK.

The interval 1–34 (MDDERVSQDPTAENETDAEDRNDDDPSGSAPPQP) is disordered. A compositionally biased stretch (acidic residues) spans 12 to 26 (AENETDAEDRNDDDP). The next 3 membrane-spanning stretches (helical) occupy residues 42–62 (LLFV…ILAV), 92–112 (MATG…IGVV), and 120–140 (SPWW…NLVD). Catalysis depends on residues D155 and D169. A helical transmembrane segment spans residues 167 to 187 (VADSGIVCGAILLVVLTLIGL).

Belongs to the peptidase A8 family.

The protein resides in the cell membrane. It catalyses the reaction Release of signal peptides from bacterial membrane prolipoproteins. Hydrolyzes -Xaa-Yaa-Zaa-|-(S,diacylglyceryl)Cys-, in which Xaa is hydrophobic (preferably Leu), and Yaa (Ala or Ser) and Zaa (Gly or Ala) have small, neutral side chains.. It functions in the pathway protein modification; lipoprotein biosynthesis (signal peptide cleavage). Its function is as follows. This protein specifically catalyzes the removal of signal peptides from prolipoproteins. This is Lipoprotein signal peptidase from Rhodococcus jostii (strain RHA1).